The chain runs to 364 residues: UDP-3-O-acylglucosamine N-acyltransferase (364 aa).

Catalysis depends on His-257, which acts as the Proton acceptor.

The protein belongs to the transferase hexapeptide repeat family. LpxD subfamily. As to quaternary structure, homotrimer.

It carries out the reaction a UDP-3-O-[(3R)-3-hydroxyacyl]-alpha-D-glucosamine + a (3R)-hydroxyacyl-[ACP] = a UDP-2-N,3-O-bis[(3R)-3-hydroxyacyl]-alpha-D-glucosamine + holo-[ACP] + H(+). The protein operates within bacterial outer membrane biogenesis; LPS lipid A biosynthesis. In terms of biological role, catalyzes the N-acylation of UDP-3-O-acylglucosamine using 3-hydroxyacyl-ACP as the acyl donor. Is involved in the biosynthesis of lipid A, a phosphorylated glycolipid that anchors the lipopolysaccharide to the outer membrane of the cell. This is UDP-3-O-acylglucosamine N-acyltransferase from Paracoccus denitrificans (strain Pd 1222).